The sequence spans 572 residues: MASTEGANNMPKQVEVRMHDSHLSSDEPKHRNLGMRMCDKLGKNLLLSLTVFGVILGAVCGGLLRLASPIHPDVVMLIAFPGDILMRMLKMLILPLIISSLITGLSGLDAKASGRLGTRAMVYYMSTTIIAAVLGVILVLAIHPGNPKLKKQLGPGKKNDEVSSLDAFLDLIRNLFPENLVQACFQQIQTVTKKVLVAPPSEEANTTKAVISMLNETMNEAPEETKIVIKKGLEFKDGMNVLGLIGFFIAFGIAMGKMGEQAKLMVEFFNILNEIVMKLVIMIMWYSPLGIACLICGKIIAIKDLEVVARQLGMYMITVIVGLIIHGGIFLPLIYFVVTRKNPFSFFAGIFQAWITALGTASSAGTLPVTFRCLEDNLGIDKRVTRFVLPVGATINMDGTALYEAVAAIFIAQMNGVILDGGQIVTVSLTATLASIGAASIPSAGLVTMLLILTAVGLPTEDISLLVAVDWLLDRMRTSVNVVGDSFGAGIVYHLSKSELDTIDSQHRMQEDIEMTKTQSIYDDKNHRESNSNQCVYAAHNSVVIDECKVTLAANGKSADCSVEEEPWKREK.

Residues 1–11 (MASTEGANNMP) are compositionally biased toward polar residues. A disordered region spans residues 1–28 (MASTEGANNMPKQVEVRMHDSHLSSDEP). Residues 1-44 (MASTEGANNMPKQVEVRMHDSHLSSDEPKHRNLGMRMCDKLGKN) lie on the Cytoplasmic side of the membrane. Ser-3, Ser-21, Ser-24, and Ser-25 each carry phosphoserine. Over residues 14 to 28 (VEVRMHDSHLSSDEP) the composition is skewed to basic and acidic residues. The S-palmitoyl cysteine moiety is linked to residue Cys-38. 3 helical membrane-spanning segments follow: residues 45-64 (LLLS…GGLL), 88-108 (MLKM…LSGL), and 121-142 (MVYY…VLAI). N-linked (GlcNAc...) asparagine glycans are attached at residues Asn-205 and Asn-215. 3 helical membrane-spanning segments follow: residues 235–258 (FKDG…MGKM), 268–295 (FFNI…ACLI), and 317–338 (ITVI…YFVV). The discontinuously helical intramembrane region spans 344–374 (FSFFAGIFQAWITALGTASSAGTLPVTFRCL). 361 to 363 (ASS) serves as a coordination point for L-aspartate. A helical transmembrane segment spans residues 384–410 (VTRFVLPVGATINMDGTALYEAVAAIF). Na(+)-binding residues include Gly-392, Thr-394, and Asn-396. Residues Thr-400, 441 to 445 (IPSAG), Asp-474, and Asn-481 each bind L-aspartate. The segment at residues 424 to 457 (IVTVSLTATLASIGAASIPSAGLVTMLLILTAVG) is an intramembrane region (discontinuously helical). Residues 471–492 (WLLDRMRTSVNVVGDSFGAGIV) form a helical membrane-spanning segment. Asn-481 and Asp-485 together coordinate Na(+). Ser-505, Ser-520, Ser-530, and Ser-532 each carry phosphoserine. Tyr-537 is modified (phosphotyrosine). Phosphoserine is present on residues Ser-542, Ser-558, and Ser-562.

This sequence belongs to the dicarboxylate/amino acid:cation symporter (DAACS) (TC 2.A.23) family. SLC1A2 subfamily. In terms of assembly, homotrimer. Interacts with AJUBA. Glycosylated. Post-translationally, palmitoylation at Cys-38 is not required for correct subcellular localization, but is important for glutamate uptake activity. Detected in brain. Detected in embryonic forebrain, especially in globus pallidus, perirhinal cortex, lateral hypothalamus, hippocampus, and on fimbria and axonal pathways connecting the neocortex, basal ganglia and thalamus (at protein level). Isoform GLT1 is expressed in the brain. Isoforms GLT-1A and GLT-1B are expressed in the liver.

The protein resides in the cell membrane. It carries out the reaction K(+)(in) + L-glutamate(out) + 3 Na(+)(out) + H(+)(out) = K(+)(out) + L-glutamate(in) + 3 Na(+)(in) + H(+)(in). It catalyses the reaction K(+)(in) + L-aspartate(out) + 3 Na(+)(out) + H(+)(out) = K(+)(out) + L-aspartate(in) + 3 Na(+)(in) + H(+)(in). The catalysed reaction is D-aspartate(out) + K(+)(in) + 3 Na(+)(out) + H(+)(out) = D-aspartate(in) + K(+)(out) + 3 Na(+)(in) + H(+)(in). In terms of biological role, sodium-dependent, high-affinity amino acid transporter that mediates the uptake of L-glutamate and also L-aspartate and D-aspartate. Functions as a symporter that transports one amino acid molecule together with two or three Na(+) ions and one proton, in parallel with the counter-transport of one K(+) ion. Mediates Cl(-) flux that is not coupled to amino acid transport; this avoids the accumulation of negative charges due to aspartate and Na(+) symport. Essential for the rapid removal of released glutamate from the synaptic cleft, and for terminating the postsynaptic action of glutamate. The chain is Excitatory amino acid transporter 2 (Slc1a2) from Mus musculus (Mouse).